A 420-amino-acid polypeptide reads, in one-letter code: Riboflavin biosynthesis protein RibBA (420 aa).

The segment at 1–202 (MTTFGTIEQA…IADLVAYRRR (202 aa)) is DHBP synthase. D-ribulose 5-phosphate contacts are provided by residues 28–29 (RE), D33, 141–145 (RPGHT), and E165. A Mg(2+)-binding site is contributed by E29. H144 provides a ligand contact to Mg(2+). The tract at residues 203–420 (TEKQVELVAE…RAVVGDGIGA (218 aa)) is GTP cyclohydrolase II. 253-257 (RVHSE) is a binding site for GTP. C258, C269, and C271 together coordinate Zn(2+). GTP contacts are provided by residues Q274, 297 to 299 (EGR), and T319. D331 functions as the Proton acceptor; for GTP cyclohydrolase activity in the catalytic mechanism. The Nucleophile; for GTP cyclohydrolase activity role is filled by R333. GTP-binding residues include T354 and K359.

This sequence in the N-terminal section; belongs to the DHBP synthase family. The protein in the C-terminal section; belongs to the GTP cyclohydrolase II family. The cofactor is Mg(2+). It depends on Mn(2+) as a cofactor. Zn(2+) is required as a cofactor.

It catalyses the reaction D-ribulose 5-phosphate = (2S)-2-hydroxy-3-oxobutyl phosphate + formate + H(+). The enzyme catalyses GTP + 4 H2O = 2,5-diamino-6-hydroxy-4-(5-phosphoribosylamino)-pyrimidine + formate + 2 phosphate + 3 H(+). The protein operates within cofactor biosynthesis; riboflavin biosynthesis; 2-hydroxy-3-oxobutyl phosphate from D-ribulose 5-phosphate: step 1/1. It participates in cofactor biosynthesis; riboflavin biosynthesis; 5-amino-6-(D-ribitylamino)uracil from GTP: step 1/4. In terms of biological role, catalyzes the conversion of D-ribulose 5-phosphate to formate and 3,4-dihydroxy-2-butanone 4-phosphate. Catalyzes the conversion of GTP to 2,5-diamino-6-ribosylamino-4(3H)-pyrimidinone 5'-phosphate (DARP), formate and pyrophosphate. The chain is Riboflavin biosynthesis protein RibBA from Salinispora arenicola (strain CNS-205).